The sequence spans 425 residues: Proteinase-activated receptor 1 (425 aa).

An N-terminal signal peptide occupies residues M1–S21. Residues A22–R41 constitute a propeptide, removed for receptor activation. 3 N-linked (GlcNAc...) asparagine glycosylation sites follow: N35, N62, and N75. Residues S42–T102 lie on the Extracellular side of the membrane. Residues L103–I128 traverse the membrane as a helical segment. The Cytoplasmic portion of the chain corresponds to L129–A137. A helical transmembrane segment spans residues V138–F157. Over K158–R176 the chain is Extracellular. Cysteines 175 and 254 form a disulfide. The chain crosses the membrane as a helical span at residues F177–I198. At D199 to R218 the chain is on the cytoplasmic side. Residues A219–L239 form a helical membrane-spanning segment. Topologically, residues K240 to A268 are extracellular. N250 and N259 each carry an N-linked (GlcNAc...) asparagine glycan. Residues Y269–V288 form a helical membrane-spanning segment. At C289 to A311 the chain is on the cytoplasmic side. A helical membrane pass occupies residues L312–I334. Residues A335 to Y350 are Extracellular-facing. A helical membrane pass occupies residues F351 to A374. Residues S375–T425 are Cytoplasmic-facing. A Phosphoserine modification is found at S418.

Belongs to the G-protein coupled receptor 1 family. Post-translationally, proteolytic cleavage by thrombin generates a new N-terminus that functions as a tethered ligand. Also proteolytically cleaved by cathepsin CTSG. Cleavage at 41-Arg-|-Ser-42 by CTSG results in receptor activation while cleavage at 55-Phe-|-Trp-56 results in inhibition of receptor activation. Phosphorylated in the C-terminal tail; probably mediating desensitization prior to the uncoupling and internalization of the receptor.

Its subcellular location is the cell membrane. Its function is as follows. High affinity receptor that binds the activated thrombin, leading to calcium release from intracellular stores. The thrombin-activated receptor signaling pathway is mediated through PTX-insensitive G proteins, activation of phospholipase C resulting in the production of 1D-myo-inositol 1,4,5-trisphosphate (InsP3) which binds to InsP3 receptors causing calcium release from the stores. In astrocytes, the calcium released into the cytosol allows the Ca(2+)-dependent release of L-glutamate into the synaptic cleft through BEST1, that targets the neuronal postsynaptic GRIN2A/NMDAR receptor resulting in the synaptic plasticity regulation. May play a role in platelets activation and in vascular development. Mediates up-regulation of pro-inflammatory cytokines, such as MCP-1/CCL2 and IL6, triggered by coagulation factor Xa (F10) in cardiac fibroblasts and umbilical vein endothelial cells. In Papio hamadryas (Hamadryas baboon), this protein is Proteinase-activated receptor 1.